Consider the following 78-residue polypeptide: Acyl carrier protein (78 aa).

Residues 2–77 (DNIVERVKKI…QAVDYILAGK (76 aa)) enclose the Carrier domain. Position 37 is an O-(pantetheine 4'-phosphoryl)serine (Ser-37).

Belongs to the acyl carrier protein (ACP) family. In terms of processing, 4'-phosphopantetheine is transferred from CoA to a specific serine of apo-ACP by AcpS. This modification is essential for activity because fatty acids are bound in thioester linkage to the sulfhydryl of the prosthetic group.

The protein resides in the cytoplasm. It functions in the pathway lipid metabolism; fatty acid biosynthesis. Functionally, carrier of the growing fatty acid chain in fatty acid biosynthesis. The polypeptide is Acyl carrier protein (Dechloromonas aromatica (strain RCB)).